The chain runs to 208 residues: Cysteine-rich protein 2 (208 aa).

The 53-residue stretch at 5-57 (CPKCDKTVCFAEKVSSLGKDWHKFCLKCERCSKTLTPGGHAEHDGKPFCHKPC) folds into the LIM zinc-binding 1 domain. Residue Lys23 is modified to N6-acetyllysine. Residues 98–119 (AEERKASGPPKGPSRASSVTTF) form a disordered region. At Ser104 the chain carries Phosphoserine. An LIM zinc-binding 2 domain is found at 126–178 (CPRCSKKVYFAEKVTSLGKDWHRPCLHCERCGKTLTPGGHAEHDGQPYCHKPC). N6-acetyllysine is present on residues Lys138 and Lys144.

Interacts with TGFB1I1.

The protein is Cysteine-rich protein 2 (CRIP2) of Pongo abelii (Sumatran orangutan).